The primary structure comprises 146 residues: Snaclec alboaggregin-B subunit beta (146 aa).

The first 23 residues, 1-23 (MGRFIFGSFGLLVLFLSLSGTGA), serve as a signal peptide directing secretion. The 120-residue stretch at 24 to 143 (DCPSDWSSYD…CSRTYPFVCK (120 aa)) folds into the C-type lectin domain. Disulfide bonds link cysteine 25–cysteine 36, cysteine 53–cysteine 142, and cysteine 119–cysteine 134.

This sequence belongs to the snaclec family. As to quaternary structure, heterodimer of subunits alpha and beta; disulfide-linked. Expressed by the venom gland.

The protein resides in the secreted. Its function is as follows. Weakly agglutinates platelets at high doses by binding to GPIbalpha (GP1BA). The sequence is that of Snaclec alboaggregin-B subunit beta from Trimeresurus albolabris (White-lipped pit viper).